Here is a 278-residue protein sequence, read N- to C-terminus: Sulfur carrier protein FdhD (278 aa).

C121 serves as the catalytic Cysteine persulfide intermediate. Residue 260 to 265 (FCKPGR) participates in Mo-bis(molybdopterin guanine dinucleotide) binding.

This sequence belongs to the FdhD family.

The protein localises to the cytoplasm. Its function is as follows. Required for formate dehydrogenase (FDH) activity. Acts as a sulfur carrier protein that transfers sulfur from IscS to the molybdenum cofactor prior to its insertion into FDH. The protein is Sulfur carrier protein FdhD of Salmonella paratyphi A (strain ATCC 9150 / SARB42).